Consider the following 288-residue polypeptide: 4-hydroxy-3-methylbut-2-enyl diphosphate reductase (288 aa).

Position 12 (Cys12) interacts with [4Fe-4S] cluster. (2E)-4-hydroxy-3-methylbut-2-enyl diphosphate contacts are provided by His42 and His77. 2 residues coordinate dimethylallyl diphosphate: His42 and His77. His42 and His77 together coordinate isopentenyl diphosphate. Cys99 provides a ligand contact to [4Fe-4S] cluster. Residue His127 participates in (2E)-4-hydroxy-3-methylbut-2-enyl diphosphate binding. Residue His127 participates in dimethylallyl diphosphate binding. Residue His127 participates in isopentenyl diphosphate binding. Glu129 serves as the catalytic Proton donor. Residue Thr165 participates in (2E)-4-hydroxy-3-methylbut-2-enyl diphosphate binding. Cys193 serves as a coordination point for [4Fe-4S] cluster. The (2E)-4-hydroxy-3-methylbut-2-enyl diphosphate site is built by Ser221, Ser222, Asn223, and Ser265. Dimethylallyl diphosphate is bound by residues Ser221, Ser222, Asn223, and Ser265. Isopentenyl diphosphate contacts are provided by Ser221, Ser222, Asn223, and Ser265.

This sequence belongs to the IspH family. It depends on [4Fe-4S] cluster as a cofactor.

It catalyses the reaction isopentenyl diphosphate + 2 oxidized [2Fe-2S]-[ferredoxin] + H2O = (2E)-4-hydroxy-3-methylbut-2-enyl diphosphate + 2 reduced [2Fe-2S]-[ferredoxin] + 2 H(+). It carries out the reaction dimethylallyl diphosphate + 2 oxidized [2Fe-2S]-[ferredoxin] + H2O = (2E)-4-hydroxy-3-methylbut-2-enyl diphosphate + 2 reduced [2Fe-2S]-[ferredoxin] + 2 H(+). Its pathway is isoprenoid biosynthesis; dimethylallyl diphosphate biosynthesis; dimethylallyl diphosphate from (2E)-4-hydroxy-3-methylbutenyl diphosphate: step 1/1. It functions in the pathway isoprenoid biosynthesis; isopentenyl diphosphate biosynthesis via DXP pathway; isopentenyl diphosphate from 1-deoxy-D-xylulose 5-phosphate: step 6/6. Functionally, catalyzes the conversion of 1-hydroxy-2-methyl-2-(E)-butenyl 4-diphosphate (HMBPP) into a mixture of isopentenyl diphosphate (IPP) and dimethylallyl diphosphate (DMAPP). Acts in the terminal step of the DOXP/MEP pathway for isoprenoid precursor biosynthesis. The protein is 4-hydroxy-3-methylbut-2-enyl diphosphate reductase of Caldanaerobacter subterraneus subsp. tengcongensis (strain DSM 15242 / JCM 11007 / NBRC 100824 / MB4) (Thermoanaerobacter tengcongensis).